The chain runs to 503 residues: Maturase K (503 aa).

This sequence belongs to the intron maturase 2 family. MatK subfamily.

Its subcellular location is the plastid. The protein localises to the chloroplast. In terms of biological role, usually encoded in the trnK tRNA gene intron. Probably assists in splicing its own and other chloroplast group II introns. In Vicia faba (Broad bean), this protein is Maturase K.